A 549-amino-acid polypeptide reads, in one-letter code: Zinc finger protein 266 (549 aa).

The KRAB domain maps to 1–42 (MLENYKNLATVGYQLFKPSLISWLEQEESRTVQRGDFQASEW). The segment at 156 to 178 (FDCSDSGKSFINHSHLQGHLRTH) adopts a C2H2-type 1; degenerate zinc-finger fold. The segment at 184–206 (HEWKECGRGFIHSTDLAVRIQTH) adopts a C2H2-type 2; degenerate zinc-finger fold. C2H2-type zinc fingers lie at residues 212–234 (YKCK…MGTH), 240–262 (YECK…RKTH), 268–290 (YKCK…MKIH), 296–318 (YECK…LKTH), 324–346 (FECK…FRIH), 352–374 (YKCK…ARTH), 380–402 (YECK…TRTH), 408–430 (FECV…LRIH), 436–458 (FECL…MRTH), 464–486 (FTCM…MRIH), 492–514 (YKCK…ERTH), and 520–542 (YECK…ERRH). A disordered region spans residues 530 to 549 (SSSSSFRNHERRHADERLSA).

The protein belongs to the krueppel C2H2-type zinc-finger protein family.

It is found in the nucleus. In terms of biological role, may be involved in transcriptional regulation. This chain is Zinc finger protein 266 (ZNF266), found in Homo sapiens (Human).